Reading from the N-terminus, the 305-residue chain is MSFTDTPDGFRSGFVSFVGRPNTGKSTLTNALVGEKIAITANQPETTRHPIRGLVHRDNAQIIVVDTPGLHRPRTLLGERLNEAVKDTYADVDLIGFTVPANEKIGPGDRWILEAVRKVSPKTPILGIITKADSVSRDLVAAQLMAVHELLGGNSEVVPVSSTSGENVETLIKVMTDLLPEGPKFYPDDHITDEDTNTRIAEAIREAALSGLKNELPHSVAVEVDEILPDPERNGVLAVHAIIYVERVGQKDIIVGHKGQRLGRIIHTSRQDIIKILGQNVFLDLRIKVLKNWQSDPKALNRLGF.

The Era-type G domain maps to 11-181 (RSGFVSFVGR…IKVMTDLLPE (171 aa)). The G1 stretch occupies residues 19–26 (GRPNTGKS). Residue 19 to 26 (GRPNTGKS) coordinates GTP. The interval 45 to 49 (ETTRH) is G2. Residues 66 to 69 (DTPG) are G3. GTP contacts are provided by residues 66-70 (DTPGL) and 130-133 (TKAD). The G4 stretch occupies residues 130–133 (TKAD). The G5 stretch occupies residues 160 to 162 (VSS). A KH type-2 domain is found at 212-291 (LKNELPHSVA…FLDLRIKVLK (80 aa)).

It belongs to the TRAFAC class TrmE-Era-EngA-EngB-Septin-like GTPase superfamily. Era GTPase family. As to quaternary structure, monomer.

Its subcellular location is the cytoplasm. The protein localises to the cell membrane. Its function is as follows. An essential GTPase that binds both GDP and GTP, with rapid nucleotide exchange. Plays a role in 16S rRNA processing and 30S ribosomal subunit biogenesis and possibly also in cell cycle regulation and energy metabolism. In Corynebacterium glutamicum (strain ATCC 13032 / DSM 20300 / JCM 1318 / BCRC 11384 / CCUG 27702 / LMG 3730 / NBRC 12168 / NCIMB 10025 / NRRL B-2784 / 534), this protein is GTPase Era.